Reading from the N-terminus, the 83-residue chain is Small ribosomal subunit protein bS16 (83 aa).

The protein belongs to the bacterial ribosomal protein bS16 family.

The sequence is that of Small ribosomal subunit protein bS16 from Herminiimonas arsenicoxydans.